Consider the following 394-residue polypeptide: Phosphopentomutase (394 aa).

Asp13, Asp286, His291, Asp327, His328, and His339 together coordinate Mn(2+).

This sequence belongs to the phosphopentomutase family. Requires Mn(2+) as cofactor.

Its subcellular location is the cytoplasm. The enzyme catalyses 2-deoxy-alpha-D-ribose 1-phosphate = 2-deoxy-D-ribose 5-phosphate. It catalyses the reaction alpha-D-ribose 1-phosphate = D-ribose 5-phosphate. Its pathway is carbohydrate degradation; 2-deoxy-D-ribose 1-phosphate degradation; D-glyceraldehyde 3-phosphate and acetaldehyde from 2-deoxy-alpha-D-ribose 1-phosphate: step 1/2. Functionally, isomerase that catalyzes the conversion of deoxy-ribose 1-phosphate (dRib-1-P) and ribose 1-phosphate (Rib-1-P) to deoxy-ribose 5-phosphate (dRib-5-P) and ribose 5-phosphate (Rib-5-P), respectively. The sequence is that of Phosphopentomutase from Bacillus cereus (strain ATCC 10987 / NRS 248).